Consider the following 689-residue polypeptide: Glycine--tRNA ligase beta subunit (689 aa).

Belongs to the class-II aminoacyl-tRNA synthetase family. As to quaternary structure, tetramer of two alpha and two beta subunits.

It is found in the cytoplasm. It catalyses the reaction tRNA(Gly) + glycine + ATP = glycyl-tRNA(Gly) + AMP + diphosphate. The protein is Glycine--tRNA ligase beta subunit of Aeromonas hydrophila subsp. hydrophila (strain ATCC 7966 / DSM 30187 / BCRC 13018 / CCUG 14551 / JCM 1027 / KCTC 2358 / NCIMB 9240 / NCTC 8049).